The primary structure comprises 135 residues: UPF0299 membrane protein Spro_1570 (135 aa).

Transmembrane regions (helical) follow at residues 4 to 24 (LFTLCWKYLRAIVLIYLCLFA), 30 to 50 (ALLPIAIPGSIIGMLLLFALL), 63 to 83 (GCHLLIRYMVLLFVPIGVGVM), and 93 to 113 (LGPLVVSCIISTLMVLVVVGY).

Belongs to the UPF0299 family.

The protein localises to the cell inner membrane. This is UPF0299 membrane protein Spro_1570 from Serratia proteamaculans (strain 568).